We begin with the raw amino-acid sequence, 160 residues long: SsrA-binding protein (160 aa).

This sequence belongs to the SmpB family.

It localises to the cytoplasm. Required for rescue of stalled ribosomes mediated by trans-translation. Binds to transfer-messenger RNA (tmRNA), required for stable association of tmRNA with ribosomes. tmRNA and SmpB together mimic tRNA shape, replacing the anticodon stem-loop with SmpB. tmRNA is encoded by the ssrA gene; the 2 termini fold to resemble tRNA(Ala) and it encodes a 'tag peptide', a short internal open reading frame. During trans-translation Ala-aminoacylated tmRNA acts like a tRNA, entering the A-site of stalled ribosomes, displacing the stalled mRNA. The ribosome then switches to translate the ORF on the tmRNA; the nascent peptide is terminated with the 'tag peptide' encoded by the tmRNA and targeted for degradation. The ribosome is freed to recommence translation, which seems to be the essential function of trans-translation. The chain is SsrA-binding protein from Pasteurella multocida (strain Pm70).